The sequence spans 122 residues: Large ribosomal subunit protein uL14 (122 aa).

The protein belongs to the universal ribosomal protein uL14 family. As to quaternary structure, part of the 50S ribosomal subunit. Forms a cluster with proteins L3 and L19. In the 70S ribosome, L14 and L19 interact and together make contacts with the 16S rRNA in bridges B5 and B8.

Binds to 23S rRNA. Forms part of two intersubunit bridges in the 70S ribosome. This chain is Large ribosomal subunit protein uL14, found in Staphylococcus carnosus (strain TM300).